The sequence spans 222 residues: Capsular polysaccharide type 5 biosynthesis protein cap5A (222 aa).

The next 2 helical transmembrane spans lie at isoleucine 20 to leucine 40 and valine 172 to phenylalanine 192.

Belongs to the CpsC/CapA family.

The protein resides in the cell membrane. Required for the biosynthesis of type 5 capsular polysaccharide (Cap5/CP5). Might act as the chain-length regulator. This Staphylococcus aureus (strain Newman) protein is Capsular polysaccharide type 5 biosynthesis protein cap5A (cap5A).